A 223-amino-acid chain; its full sequence is N-terminal Xaa-Pro-Lys N-methyltransferase 1-B (223 aa).

S-adenosyl-L-methionine contacts are provided by residues Gly69, Arg74, 91-93 (DVT), 119-120 (LQ), and Gln135.

The protein belongs to the methyltransferase superfamily. NTM1 family.

Its subcellular location is the nucleus. It catalyses the reaction N-terminal L-alanyl-L-prolyl-L-lysyl-[protein] + 3 S-adenosyl-L-methionine = N-terminal N,N,N-trimethyl-L-alanyl-L-prolyl-L-lysyl-[protein] + 3 S-adenosyl-L-homocysteine + 3 H(+). It carries out the reaction N-terminal L-seryl-L-prolyl-L-lysyl-[protein] + 3 S-adenosyl-L-methionine = N-terminal N,N,N-trimethyl-L-seryl-L-prolyl-L-lysyl-[protein] + 3 S-adenosyl-L-homocysteine + 3 H(+). The enzyme catalyses N-terminal L-prolyl-L-prolyl-L-lysyl-[protein] + 2 S-adenosyl-L-methionine = N-terminal N,N-dimethyl-L-prolyl-L-prolyl-L-lysyl-[protein] + 2 S-adenosyl-L-homocysteine + 2 H(+). In terms of biological role, distributive alpha-N-methyltransferase that methylates the N-terminus of target proteins containing the N-terminal motif [Ala/Gly/Pro/Ser]-Pro-Lys when the initiator Met is cleaved. Specifically catalyzes mono-, di- or tri-methylation of the exposed alpha-amino group of the Ala, Gly or Ser residue in the [Ala/Gly/Ser]-Pro-Lys motif and mono- or di-methylation of Pro in the Pro-Pro-Lys motif. Required during mitosis for normal bipolar spindle formation and chromosome segregation via its action on target proteins. In Xenopus laevis (African clawed frog), this protein is N-terminal Xaa-Pro-Lys N-methyltransferase 1-B (ntmt1-b).